The chain runs to 494 residues: Guanosine-5'-triphosphate,3'-diphosphate pyrophosphatase (494 aa).

This sequence belongs to the GppA/Ppx family. GppA subfamily.

The enzyme catalyses guanosine 3'-diphosphate 5'-triphosphate + H2O = guanosine 3',5'-bis(diphosphate) + phosphate + H(+). Its pathway is purine metabolism; ppGpp biosynthesis; ppGpp from GTP: step 2/2. Catalyzes the conversion of pppGpp to ppGpp. Guanosine pentaphosphate (pppGpp) is a cytoplasmic signaling molecule which together with ppGpp controls the 'stringent response', an adaptive process that allows bacteria to respond to amino acid starvation, resulting in the coordinated regulation of numerous cellular activities. In Cronobacter sakazakii (strain ATCC BAA-894) (Enterobacter sakazakii), this protein is Guanosine-5'-triphosphate,3'-diphosphate pyrophosphatase.